Reading from the N-terminus, the 242-residue chain is MTKLFIPYIMGNKDLIENATLLSENGADIIEIGVPFSDPVADGPVIMEAGQQAIKQGITIDYIFNQLEKHGDQIKCNYVLMTYYNIICHYGEQAFFEKCRDTGVYGLIIPDLPYELSQRLKQQFSHYGVKIISLVAMTTDDKRIKDIVSHAEGFIYTVTMNATTGQNGAFHPELKRKIESIKAIANVPVVAGFGIRTPQHVADIKEVADGIVIGSEIVKRFKSNTREEIIRYLQSIQQTLNN.

Active-site proton acceptor residues include Glu31 and Asp42.

It belongs to the TrpA family. Tetramer of two alpha and two beta chains.

It catalyses the reaction (1S,2R)-1-C-(indol-3-yl)glycerol 3-phosphate + L-serine = D-glyceraldehyde 3-phosphate + L-tryptophan + H2O. The protein operates within amino-acid biosynthesis; L-tryptophan biosynthesis; L-tryptophan from chorismate: step 5/5. Its function is as follows. The alpha subunit is responsible for the aldol cleavage of indoleglycerol phosphate to indole and glyceraldehyde 3-phosphate. This is Tryptophan synthase alpha chain from Staphylococcus aureus (strain Mu3 / ATCC 700698).